A 427-amino-acid chain; its full sequence is Zinc finger protein 2 (427 aa).

The KRAB domain occupies 14-85 (VTFEDVAVTF…GFHGSEEKTW (72 aa)). Positions 111-142 (HRKQSSLCPKREIQTLTGGPEPEKESPKARTC) are disordered. 8 consecutive C2H2-type zinc fingers follow at residues 169-191 (QECS…QRTH), 197-219 (YDCP…LMFH), 225-247 (YECD…QRIH), 253-275 (FKCN…QRIH), 281-303 (YECQ…LLTH), 309-331 (YECR…QKVH), 337-359 (YQCS…QKIH), and 365-387 (YECG…QRVH). The C2H2-type 9; degenerate zinc finger occupies 393–415 (FECSVCGKEFSSKSSIIQHQRRY).

The protein belongs to the krueppel C2H2-type zinc-finger protein family.

The protein resides in the nucleus. Its function is as follows. May be involved in transcriptional regulation. This Mus musculus (Mouse) protein is Zinc finger protein 2.